A 239-amino-acid chain; its full sequence is Short palate, lung and nasal epithelium carcinoma-associated protein 2A (239 aa).

The N-terminal stretch at 1–20 (MVQLWKLVLLCGLLAGTSES) is a signal peptide. C166 and C209 form a disulfide bridge.

It belongs to the BPI/LBP/Plunc superfamily. Plunc family. As to expression, detected in salivary tissues: parotid, submandibular and sublingual glands.

Its subcellular location is the secreted. In Bos taurus (Bovine), this protein is Short palate, lung and nasal epithelium carcinoma-associated protein 2A (SPLUNC2A).